Consider the following 495-residue polypeptide: Galactose-1-phosphate uridylyltransferase (495 aa).

This sequence belongs to the galactose-1-phosphate uridylyltransferase type 2 family.

The protein resides in the cytoplasm. It carries out the reaction alpha-D-galactose 1-phosphate + UDP-alpha-D-glucose = alpha-D-glucose 1-phosphate + UDP-alpha-D-galactose. It functions in the pathway carbohydrate metabolism; galactose metabolism. The sequence is that of Galactose-1-phosphate uridylyltransferase from Ligilactobacillus salivarius (strain UCC118) (Lactobacillus salivarius).